Consider the following 468-residue polypeptide: Tyramine receptor tyra-2 (468 aa).

At 1–23 the chain is on the extracellular side; that stretch reads MMSSYVMSPVDETYTLFQILKGS. A helical membrane pass occupies residues 24–43; the sequence is ALFLLVLWTIFANSLVFIVL. At 44 to 54 the chain is on the cytoplasmic side; sequence YKNPRLQTVPN. Residues 55–77 form a helical membrane-spanning segment; the sequence is LLVGNLAFSDLALGLIVLPLSSV. Topologically, residues 78–91 are extracellular; it reads YAIAGEWVFPDALC. Residues Cys-91 and Cys-177 are joined by a disulfide bond. A helical membrane pass occupies residues 92-114; it reads EVFVSADILCSTASIWNLSIVGL. Over 115-134 the chain is Cytoplasmic; that stretch reads DRYWAITSPVAYMSKRNKRT. A helical membrane pass occupies residues 135–157; the sequence is AGIMILSVWISSALISLAPLLGW. Residues 158–186 lie on the Extracellular side of the membrane; it reads KQTAQTPNLIYEKNNTVRQCTFLDLPSYT. N-linked (GlcNAc...) asparagine glycosylation is present at Asn-171. The chain crosses the membrane as a helical span at residues 187–209; it reads VYSATGSFFIPTLLMFFVYFKIY. Residues 210–387 lie on the Cytoplasmic side of the membrane; it reads QAFAKHRARQ…SAAKERRGVK (178 aa). Residues 252–306 are disordered; the sequence is DEFAKEEEEEEDSESSGQVENGLGNGNDAIIEEDECEDEDSDEKRDDHTSMTTVT. 2 stretches are compositionally biased toward acidic residues: residues 255-265 and 281-292; these read AKEEEEEEDSE and IIEEDECEDEDS. The helical transmembrane segment at 388-410 threads the bilayer; it reads VLGIILGCFTVCWAPFFTMYVLV. Residues 411–424 lie on the Extracellular side of the membrane; sequence QFCKDCSPNAHIEM. Residues 425–444 traverse the membrane as a helical segment; that stretch reads FITWLGYSNSAMNPIIYTVF. Residues 445-468 are Cytoplasmic-facing; it reads NRDYQIALKRLFTSEKKPSSTSRV.

Belongs to the G-protein coupled receptor 1 family. Expressed in the pharyngeal neurons, MCL/R and NSML/R and the AS group of amphidial sensory neurons, ASEL/R, AGSL/R, ASHL/R and ASIL/R.

It localises to the cell membrane. Functionally, G-protein coupled receptor for tyramine, a known neurotransmitter and neuromodulator and direct precursor of octopamine. Expression in amphidial sensory neurons suggests a role in chemosensation. This chain is Tyramine receptor tyra-2 (tyra-2), found in Caenorhabditis elegans.